The primary structure comprises 357 residues: Isopentenyl-diphosphate delta-isomerase (357 aa).

6 to 7 (RK) contributes to the substrate binding site. FMN-binding positions include serine 62, 63-65 (AMT), serine 93, and asparagine 122. A substrate-binding site is contributed by 93–95 (SQR). Glutamine 156 lines the substrate pocket. Residue glutamate 157 coordinates Mg(2+). Residues lysine 186, threonine 216, 267-269 (GVR), and 288-289 (AL) contribute to the FMN site.

This sequence belongs to the IPP isomerase type 2 family. Homooctamer. Dimer of tetramers. FMN serves as cofactor. Requires NADPH as cofactor. It depends on Mg(2+) as a cofactor.

The protein localises to the cytoplasm. It carries out the reaction isopentenyl diphosphate = dimethylallyl diphosphate. Functionally, involved in the biosynthesis of isoprenoids. Catalyzes the 1,3-allylic rearrangement of the homoallylic substrate isopentenyl (IPP) to its allylic isomer, dimethylallyl diphosphate (DMAPP). The sequence is that of Isopentenyl-diphosphate delta-isomerase from Methanothrix thermoacetophila (strain DSM 6194 / JCM 14653 / NBRC 101360 / PT) (Methanosaeta thermophila).